The chain runs to 631 residues: Phosphomethylpyrimidine synthase (631 aa).

Residues Asn239, Met268, Tyr297, His333, 353-355 (SRG), 394-397 (DGLR), and Glu433 contribute to the substrate site. Residue His437 participates in Zn(2+) binding. Residue Tyr460 coordinates substrate. His501 contributes to the Zn(2+) binding site. Positions 581, 584, and 589 each coordinate [4Fe-4S] cluster.

The protein belongs to the ThiC family. Homodimer. The cofactor is [4Fe-4S] cluster.

The catalysed reaction is 5-amino-1-(5-phospho-beta-D-ribosyl)imidazole + S-adenosyl-L-methionine = 4-amino-2-methyl-5-(phosphooxymethyl)pyrimidine + CO + 5'-deoxyadenosine + formate + L-methionine + 3 H(+). It participates in cofactor biosynthesis; thiamine diphosphate biosynthesis. Functionally, catalyzes the synthesis of the hydroxymethylpyrimidine phosphate (HMP-P) moiety of thiamine from aminoimidazole ribotide (AIR) in a radical S-adenosyl-L-methionine (SAM)-dependent reaction. The protein is Phosphomethylpyrimidine synthase of Shigella sonnei (strain Ss046).